A 1529-amino-acid chain; its full sequence is ABC multidrug transporter AFR2 (1529 aa).

In terms of domain architecture, ABC transporter 1 spans 144–394; the sequence is GSLRDLIGNR…FVDMGFHCPS (251 aa). Residues N235 and N318 are each glycosylated (N-linked (GlcNAc...) asparagine). Helical transmembrane passes span 510–530, 539–559, 589–609, 614–634, and 648–668; these read LFGN…LPVT, ALLF…ILIL, IPYK…MTNL, GAYF…SMLF, and LAPA…AVNV. The N-linked (GlcNAc...) asparagine glycan is linked to N742. A helical membrane pass occupies residues 757–777; that stretch reads GILIGFFLFFTAIYLTATEFI. Positions 845–1087 constitute an ABC transporter 2 domain; sequence FSWKDVVYDI…ILIDYFEKNG (243 aa). Position 881 to 888 (881 to 888) interacts with ATP; it reads GVSGAGKT. 5 helical membrane passes run 1193-1213, 1229-1249, 1268-1288, 1314-1334, and 1353-1373; these read YIWA…FSFF, VFMM…NFVT, IFIL…GVII, LMFL…IMIV, and MCLI…FWVF. An N-linked (GlcNAc...) asparagine glycan is attached at N1434. The helical transmembrane segment at 1465–1485 threads the bilayer; sequence FGLLWVYVVFNVIAAIGIYWL. Residues 1493-1505 show a composition bias toward basic and acidic residues; sequence GKERASEPEDVQE. Residues 1493 to 1529 are disordered; the sequence is GKERASEPEDVQEKQVPAQSTEKKYQSISRSSESTVA. The segment covering 1518 to 1529 has biased composition (polar residues); that stretch reads QSISRSSESTVA.

It belongs to the ABC transporter superfamily. ABCG family. PDR (TC 3.A.1.205) subfamily.

Its subcellular location is the cell membrane. It carries out the reaction itraconazole(in) + ATP + H2O = itraconazole(out) + ADP + phosphate + H(+). The catalysed reaction is voriconazole(in) + ATP + H2O = voriconazole(out) + ADP + phosphate + H(+). It catalyses the reaction fluconazole(in) + ATP + H2O = fluconazole(out) + ADP + phosphate + H(+). Functionally, pleiotropic ABC efflux transporter that confers resistance to structurally and functionally unrelated compounds including azoles such as fluconazole (FLC), itraconazole (ITC), posaconazole (POS), and voriconazole (VRC). This is ABC multidrug transporter AFR2 from Cryptococcus deuterogattii (strain R265) (Cryptococcus gattii VGII (strain R265)).